A 209-amino-acid polypeptide reads, in one-letter code: Putative NAD(P)H nitroreductase YdgI (209 aa).

Residues 14-16 (RRS), 72-74 (QTQ), 161-162 (GG), and Arg199 contribute to the FMN site.

It belongs to the nitroreductase family. FMN is required as a cofactor.

The chain is Putative NAD(P)H nitroreductase YdgI (ydgI) from Bacillus subtilis (strain 168).